We begin with the raw amino-acid sequence, 163 residues long: MFRRLIGVVVATVLLTFQLIVGSATALELDEATRTVPLNAQGDTVTLSLKQVKEGKRLFQYACAQCHVGGVTKTNQNVGLEPEALALATPNRNNIEGLVDYMKNPTTYDGVEEISEIHPSIKSADIFTAMRNLTDKDLESIAGHILLQPKILGDKWGGGKIYY.

The N-terminal stretch at 1-26 (MFRRLIGVVVATVLLTFQLIVGSATA) is a signal peptide. Heme c is bound by residues Cys63, Cys66, His67, and His118.

This sequence belongs to the cytochrome c family. PsbV subfamily. As to quaternary structure, PSII is composed of 1 copy each of membrane proteins PsbA, PsbB, PsbC, PsbD, PsbE, PsbF, PsbH, PsbI, PsbJ, PsbK, PsbL, PsbM, PsbT, PsbX, PsbY, PsbZ, Psb30/Ycf12, peripheral proteins PsbO, CyanoQ (PsbQ), PsbU, PsbV and a large number of cofactors. It forms dimeric complexes. The cofactor is heme c.

Its subcellular location is the cellular thylakoid membrane. Its function is as follows. One of the extrinsic, lumenal subunits of photosystem II (PSII). PSII is a light-driven water plastoquinone oxidoreductase, using light energy to abstract electrons from H(2)O, generating a proton gradient subsequently used for ATP formation. The extrinsic proteins stabilize the structure of photosystem II oxygen-evolving complex (OEC), the ion environment of oxygen evolution and protect the OEC against heat-induced inactivation. Low-potential cytochrome c that plays a role in the OEC of PSII. The polypeptide is Photosystem II extrinsic protein V (Trichormus variabilis (strain ATCC 29413 / PCC 7937) (Anabaena variabilis)).